Reading from the N-terminus, the 336-residue chain is 4-hydroxy-3-methylbut-2-enyl diphosphate reductase (336 aa).

Cys21 contributes to the [4Fe-4S] cluster binding site. The (2E)-4-hydroxy-3-methylbut-2-enyl diphosphate site is built by His50 and His86. Residues His50 and His86 each contribute to the dimethylallyl diphosphate site. Isopentenyl diphosphate is bound by residues His50 and His86. Cys108 is a [4Fe-4S] cluster binding site. Residue His136 participates in (2E)-4-hydroxy-3-methylbut-2-enyl diphosphate binding. His136 provides a ligand contact to dimethylallyl diphosphate. His136 contacts isopentenyl diphosphate. Glu138 functions as the Proton donor in the catalytic mechanism. A (2E)-4-hydroxy-3-methylbut-2-enyl diphosphate-binding site is contributed by Thr177. Residue Cys207 coordinates [4Fe-4S] cluster. (2E)-4-hydroxy-3-methylbut-2-enyl diphosphate is bound by residues Ser235, Ser236, Asn237, and Ser280. Positions 235, 236, 237, and 280 each coordinate dimethylallyl diphosphate. Isopentenyl diphosphate contacts are provided by Ser235, Ser236, Asn237, and Ser280.

It belongs to the IspH family. The cofactor is [4Fe-4S] cluster.

The enzyme catalyses isopentenyl diphosphate + 2 oxidized [2Fe-2S]-[ferredoxin] + H2O = (2E)-4-hydroxy-3-methylbut-2-enyl diphosphate + 2 reduced [2Fe-2S]-[ferredoxin] + 2 H(+). The catalysed reaction is dimethylallyl diphosphate + 2 oxidized [2Fe-2S]-[ferredoxin] + H2O = (2E)-4-hydroxy-3-methylbut-2-enyl diphosphate + 2 reduced [2Fe-2S]-[ferredoxin] + 2 H(+). It participates in isoprenoid biosynthesis; dimethylallyl diphosphate biosynthesis; dimethylallyl diphosphate from (2E)-4-hydroxy-3-methylbutenyl diphosphate: step 1/1. It functions in the pathway isoprenoid biosynthesis; isopentenyl diphosphate biosynthesis via DXP pathway; isopentenyl diphosphate from 1-deoxy-D-xylulose 5-phosphate: step 6/6. Its function is as follows. Catalyzes the conversion of 1-hydroxy-2-methyl-2-(E)-butenyl 4-diphosphate (HMBPP) into a mixture of isopentenyl diphosphate (IPP) and dimethylallyl diphosphate (DMAPP). Acts in the terminal step of the DOXP/MEP pathway for isoprenoid precursor biosynthesis. This Mesorhizobium japonicum (strain LMG 29417 / CECT 9101 / MAFF 303099) (Mesorhizobium loti (strain MAFF 303099)) protein is 4-hydroxy-3-methylbut-2-enyl diphosphate reductase.